The sequence spans 201 residues: Cell division protein SepF (201 aa).

Basic and acidic residues predominate over residues 27–38 (VQERTSVQRDSR). A disordered region spans residues 27 to 99 (VQERTSVQRD…PRIQNKDSVR (73 aa)). Polar residues-rich tracts occupy residues 43 to 54 (QEASQRSHMTNS) and 82 to 92 (DNSYQQATPRI).

It belongs to the SepF family. Homodimer. Interacts with FtsZ.

Its subcellular location is the cytoplasm. In terms of biological role, cell division protein that is part of the divisome complex and is recruited early to the Z-ring. Probably stimulates Z-ring formation, perhaps through the cross-linking of FtsZ protofilaments. Its function overlaps with FtsA. This Streptococcus agalactiae serotype III (strain NEM316) protein is Cell division protein SepF.